Here is an 80-residue protein sequence, read N- to C-terminus: Gamma-conotoxin PnVIIA (80 aa).

The signal sequence occupies residues M1 to A19. Residues Q20–W43 constitute a propeptide that is removed on maturation. Cystine bridges form between C47-C61, C54-C65, and C60-C70. E59 carries the 4-carboxyglutamate modification. At E71 the chain carries 4-carboxyglutamate. A 4-hydroxyproline modification is found at P76. Residues F78–A80 constitute a propeptide that is removed on maturation.

In terms of tissue distribution, expressed by the venom duct.

Its subcellular location is the secreted. Its function is as follows. Gamma-conotoxins may act on voltage-gated non-specific cation pacemaker channels (HCN). Triggers depolarization and firing of action potential bursts in the caudodorsal neurons of lymnaea. This effect is due to activation or enhancement of a slow inward cation current that may underlie endogenous bursting activity of these neurons. The protein is Gamma-conotoxin PnVIIA of Conus pennaceus (Feathered cone).